A 710-amino-acid chain; its full sequence is Solute carrier organic anion transporter family member 3A1 (710 aa).

Methionine 1 carries the post-translational modification N-acetylmethionine. Residues 1 to 15 are compositionally biased toward gly residues; it reads MQGKKPGGSSGGGRS. The tract at residues 1–25 is disordered; that stretch reads MQGKKPGGSSGGGRSGELQGDEAQR. Over 1–40 the chain is Cytoplasmic; that stretch reads MQGKKPGGSSGGGRSGELQGDEAQRNKKKKKKVSCFSNIK. A helical membrane pass occupies residues 41–60; the sequence is IFLVSECALMLAQGTVGAYL. Over 61-79 the chain is Extracellular; the sequence is VSVLTTLERRFNLQSADVG. The chain crosses the membrane as a helical span at residues 80–100; sequence VIASSFEIGNLALILFVSYFG. Topologically, residues 101–106 are cytoplasmic; that stretch reads ARGHRP. A helical transmembrane segment spans residues 107–131; that stretch reads RLIGCGGIVMALGALLSALPEFLTH. Over 132 to 174 the chain is Extracellular; sequence QYKYEAGEIRWGAEGRDVCATNGSSSDEGPDPDLICRNRTATN. 2 N-linked (GlcNAc...) asparagine glycosylation sites follow: asparagine 153 and asparagine 169. Residues 175 to 203 form a helical membrane-spanning segment; it reads MMYLLLIGAQVLLGIGATPVQPLGVSYID. Residues 204 to 222 lie on the Cytoplasmic side of the membrane; sequence DHVRRKDSSLYIGILFTML. A helical membrane pass occupies residues 223-243; sequence VFGPACGFILGSFCTKIYVDA. At 244-261 the chain is on the extracellular side; that stretch reads VFIDTSNLDITPDDPRWI. The helical transmembrane segment at 262–286 threads the bilayer; the sequence is GAWWGGFLLCGALLFFSSLLMFGFP. The Cytoplasmic segment spans residues 287 to 344; that stretch reads QSLPPHSDPGMESEQAMLPEREYERPKPSNGVLRHPLEPDSSASCFQQLRVIPKVTKH. The helical transmembrane segment at 345–366 threads the bilayer; the sequence is LLSNPVFTCIVLAACMEIAVVA. Residues 367–386 are Extracellular-facing; the sequence is GFAAFLGKYLEQQFNLTTSS. N-linked (GlcNAc...) asparagine glycosylation is present at asparagine 381. The chain crosses the membrane as a helical span at residues 387–410; it reads ANQLLGMTAIPCACLGIFLGGLLV. Topologically, residues 411–414 are cytoplasmic; sequence KKLS. A helical membrane pass occupies residues 415-438; sequence LSALGAIRMAMLVNLVSTACYVSF. At 439–539 the chain is on the extracellular side; it reads LFLGCDTGPV…PGCQEAFLTF (101 aa). N-linked (GlcNAc...) asparagine glycosylation occurs at asparagine 457. In terms of domain architecture, Kazal-like spans 465 to 513; it reads LDPYSPCNNNCECQTDSFTPVCGADGITYLSACFAGCNSTNLTGCACLT. 3 disulfide bridges follow: cysteine 471–cysteine 497, cysteine 475–cysteine 486, and cysteine 477–cysteine 501. N-linked (GlcNAc...) asparagine glycans are attached at residues asparagine 502, asparagine 505, and asparagine 519. A helical transmembrane segment spans residues 540–562; sequence LCVMCVCSLIGAMAQTPSVIILI. The Cytoplasmic segment spans residues 563-571; that stretch reads RTVSPELKS. A helical membrane pass occupies residues 572-597; that stretch reads YALGVLFLLLRLLGFIPPPLIFGAGI. At 598 to 630 the chain is on the extracellular side; sequence DSTCLFWSTFCGEQGACVLYDNVVYRYLYVSIA. Residues 631 to 648 traverse the membrane as a helical segment; the sequence is IALKSFAFILYTTTWQCL. The Cytoplasmic portion of the chain corresponds to 649–705; that stretch reads RKNYKRYIKNHEGGLSTSEFFASTLTLDNLGRDPVPAHQTHRTKFIYNLEDHEWCEN.

It belongs to the organo anion transporter (TC 2.A.60) family. As to expression, widely expressed.

It is found in the basolateral cell membrane. The protein localises to the apical cell membrane. It localises to the basal cell membrane. It carries out the reaction L-thyroxine(out) = L-thyroxine(in). It catalyses the reaction prostaglandin E1(out) = prostaglandin E1(in). The catalysed reaction is prostaglandin E2(out) = prostaglandin E2(in). The enzyme catalyses prostaglandin F2alpha(out) = prostaglandin F2alpha(in). It carries out the reaction (5Z,8Z,11Z,14Z)-eicosatetraenoate(out) = (5Z,8Z,11Z,14Z)-eicosatetraenoate(in). It catalyses the reaction taurocholate(out) = taurocholate(in). The catalysed reaction is glycocholate(out) = glycocholate(in). The enzyme catalyses estrone 3-sulfate(out) = estrone 3-sulfate(in). It carries out the reaction argipressin(out) = argipressin(in). Putative organic anion antiporter with apparent broad substrate specificity. Recognizes various substrates including thyroid hormone L-thyroxine, prostanoids such as prostaglandin E1 and E2, bile acids such as taurocholate, glycolate and glycochenodeoxycholate and peptide hormones such as L-arginine vasopressin, likely operating in a tissue-specific manner. The transport mechanism, its electrogenicity and potential tissue-specific counterions remain to be elucidated. This is Solute carrier organic anion transporter family member 3A1 (Slco3a1) from Mus musculus (Mouse).